The sequence spans 271 residues: Sorting nexin-11 (271 aa).

The region spanning 16 to 132 (VITVRVQDPR…HLFLQSQLSV (117 aa)) is the PX domain. Arg-59, Lys-85, and Arg-99 together coordinate a 1,2-diacyl-sn-glycero-3-phospho-(1D-myo-inositol-3-phosphate). The important for membrane trafficking stretch occupies residues 135–139 (IEACV). Residues 185–271 (PRSGRRSSPS…PTQLDTAWDK (87 aa)) are disordered. The segment covering 213–230 (SEGPSSESPTLLPSSSLP) has biased composition (low complexity).

It belongs to the sorting nexin family. In terms of assembly, monomer. Interacts with TRPV3; this interaction promotes TRPV3 trafficking from the cell membrane to lysosome for degradation.

Its subcellular location is the cell membrane. The protein localises to the endosome. The protein resides in the cytoplasm. Functionally, phosphoinositide-binding protein involved in protein sorting and membrane trafficking in endosomes. Regulates the levels of TRPV3 by promoting its trafficking from the cell membrane to lysosome for degradation. The protein is Sorting nexin-11 (Snx11) of Mus musculus (Mouse).